The sequence spans 313 residues: UPF0761 membrane protein VS_0126 (313 aa).

The next 6 helical transmembrane spans lie at 41 to 61, 104 to 124, 139 to 159, 185 to 205, 217 to 237, and 249 to 269; these read YLAY…LSIL, MTAV…SNID, AVLS…LIGA, VIRK…YLLV, AGSL…AAYI, and ALAA…IVLV. Residues 281 to 290 show a composition bias toward polar residues; the sequence is EQWSDSQEMV. Residues 281–313 are disordered; that stretch reads EQWSDSQEMVHSSDKDKITEQGNNSDSTDPESK.

It belongs to the UPF0761 family.

It localises to the cell inner membrane. This Vibrio atlanticus (strain LGP32) (Vibrio splendidus (strain Mel32)) protein is UPF0761 membrane protein VS_0126.